Here is a 135-residue protein sequence, read N- to C-terminus: Hemoglobin subunit beta-3 (135 aa).

The 134-residue stretch at 2–135 (HWTAEEKALV…VVDALSKAYQ (134 aa)) folds into the Globin domain. Heme b is bound by residues histidine 57 and histidine 81.

It belongs to the globin family. In terms of assembly, hb 3 is a heterotetramer of two alpha and two beta-3 chains. Red blood cells (at protein level).

Functionally, involved in oxygen transport from gills to the various peripheral tissues. This chain is Hemoglobin subunit beta-3, found in Somniosus microcephalus (Greenland sleeper shark).